Here is a 182-residue protein sequence, read N- to C-terminus: CDP-diacylglycerol--glycerol-3-phosphate 3-phosphatidyltransferase (182 aa).

At 2–12 the chain is on the cytoplasmic side; that stretch reads QFNIPTLLTLF. Residues 13–37 form a helical membrane-spanning segment; it reads RVILIPFFVLVFYLPVTWSPFAAAL. Topologically, residues 38–60 are periplasmic; sequence IFCVAAVTDWFDGFLARRWNQST. The helical transmembrane segment at 61-81 threads the bilayer; sequence RFGAFLDPVADKVLVAIAMVL. The Cytoplasmic segment spans residues 82-86; sequence VTEHY. A helical transmembrane segment spans residues 87 to 107; the sequence is HSWWVTLPAATMIAREIIISA. Residues 108-145 are Periplasmic-facing; sequence LREWMAELGKRSSVAVSWIGKVKTTAQMVALAWLLWRP. The helical transmembrane segment at 146 to 168 threads the bilayer; sequence NIWVEYAGIALFFVAAVLTLWSM. Topologically, residues 169–181 are cytoplasmic; sequence LQYLSAARADLLD.

It belongs to the CDP-alcohol phosphatidyltransferase class-I family.

The protein resides in the cell inner membrane. The enzyme catalyses a CDP-1,2-diacyl-sn-glycerol + sn-glycerol 3-phosphate = a 1,2-diacyl-sn-glycero-3-phospho-(1'-sn-glycero-3'-phosphate) + CMP + H(+). The protein operates within phospholipid metabolism; phosphatidylglycerol biosynthesis; phosphatidylglycerol from CDP-diacylglycerol: step 1/2. In terms of biological role, catalyzes the conversion of cytidine diphosphate diacylglycerol (CDP-DG) and glycerol 3-phosphate into phosphatidylglycerol. Essential for the synthesis of anionic phospholipids, thereby playing a role in balancing the ratio of zwitterionic and anionic phospholipids, which is thought to be important for normal membrane function. This is CDP-diacylglycerol--glycerol-3-phosphate 3-phosphatidyltransferase from Shigella sonnei (strain Ss046).